The sequence spans 344 residues: Uroporphyrinogen decarboxylase (344 aa).

Residues 23–27 (RQAGR), D73, Y149, T204, and H321 each bind substrate.

It belongs to the uroporphyrinogen decarboxylase family. As to quaternary structure, homodimer.

The protein localises to the cytoplasm. The enzyme catalyses uroporphyrinogen III + 4 H(+) = coproporphyrinogen III + 4 CO2. Its pathway is porphyrin-containing compound metabolism; protoporphyrin-IX biosynthesis; coproporphyrinogen-III from 5-aminolevulinate: step 4/4. Its function is as follows. Catalyzes the decarboxylation of four acetate groups of uroporphyrinogen-III to yield coproporphyrinogen-III. In Francisella tularensis subsp. tularensis (strain FSC 198), this protein is Uroporphyrinogen decarboxylase.